A 194-amino-acid chain; its full sequence is Protein GrpE (194 aa).

The tract at residues 1–44 is disordered; that stretch reads MAEEKQNEELNEQEELNETEAETAEAEQTAAEADAPAEETQTEM. Over residues 9-25 the composition is skewed to acidic residues; that stretch reads ELNEQEELNETEAETAE.

The protein belongs to the GrpE family. Homodimer.

It is found in the cytoplasm. Its function is as follows. Participates actively in the response to hyperosmotic and heat shock by preventing the aggregation of stress-denatured proteins, in association with DnaK and GrpE. It is the nucleotide exchange factor for DnaK and may function as a thermosensor. Unfolded proteins bind initially to DnaJ; upon interaction with the DnaJ-bound protein, DnaK hydrolyzes its bound ATP, resulting in the formation of a stable complex. GrpE releases ADP from DnaK; ATP binding to DnaK triggers the release of the substrate protein, thus completing the reaction cycle. Several rounds of ATP-dependent interactions between DnaJ, DnaK and GrpE are required for fully efficient folding. In Bacillus licheniformis (strain ATCC 14580 / DSM 13 / JCM 2505 / CCUG 7422 / NBRC 12200 / NCIMB 9375 / NCTC 10341 / NRRL NRS-1264 / Gibson 46), this protein is Protein GrpE.